A 448-amino-acid chain; its full sequence is Chaperone SurA (448 aa).

The first 27 residues, 1–27 (MKKTLRFAAVAAGLVASLITVAPSASA), serve as a signal peptide directing secretion. 2 consecutive PpiC domains span residues 185–288 (QQDL…RLVD) and 301–399 (IVQT…QVLG). The disordered stretch occupies residues 230–249 (LAKSQSEADDAKKGGDLGFK).

The protein resides in the periplasm. It catalyses the reaction [protein]-peptidylproline (omega=180) = [protein]-peptidylproline (omega=0). Its function is as follows. Chaperone involved in the correct folding and assembly of outer membrane proteins. Recognizes specific patterns of aromatic residues and the orientation of their side chains, which are found more frequently in integral outer membrane proteins. May act in both early periplasmic and late outer membrane-associated steps of protein maturation. This chain is Chaperone SurA, found in Burkholderia thailandensis (strain ATCC 700388 / DSM 13276 / CCUG 48851 / CIP 106301 / E264).